The primary structure comprises 201 residues: Putative ankyrin repeat protein R868 (201 aa).

ANK repeat units follow at residues 125–154 (YENNALNWASKYGFLEIVKLIMENKINCYF) and 156–188 (KAKKAYQLAITYGHTDVVDFLKTYVNTNSDYNF).

This Acanthamoeba polyphaga (Amoeba) protein is Putative ankyrin repeat protein R868.